The chain runs to 187 residues: Dihydrofolate reductase 2, mitochondrial (187 aa).

Positions 4–185 constitute a DHFR domain; sequence LLNCIVAVSQ…IKYKFEVCEK (182 aa). NADP(+) is bound by residues Ala-10 and 16–22; that span reads GIGKNGD. 31–36 lines the substrate pocket; sequence EFRYFQ. Residue 55 to 57 participates in NADP(+) binding; sequence RKT. A substrate-binding site is contributed by Arg-71. Residues 77-79 and 117-124 contribute to the NADP(+) site; these read SRE and GGSSVYKE.

This sequence belongs to the dihydrofolate reductase family. As to expression, expressed in numerous cell lines.

The protein localises to the mitochondrion. It localises to the mitochondrion matrix. Its subcellular location is the mitochondrion inner membrane. The catalysed reaction is (6S)-5,6,7,8-tetrahydrofolate + NADP(+) = 7,8-dihydrofolate + NADPH + H(+). It participates in cofactor biosynthesis; tetrahydrofolate biosynthesis; 5,6,7,8-tetrahydrofolate from 7,8-dihydrofolate: step 1/1. Functionally, key enzyme in folate metabolism. Contributes to the de novo mitochondrial thymidylate biosynthesis pathway. Required to prevent uracil accumulation in mtDNA. Binds its own mRNA and that of DHFR. The chain is Dihydrofolate reductase 2, mitochondrial from Homo sapiens (Human).